Here is a 266-residue protein sequence, read N- to C-terminus: DNA repair protein RecO (266 aa).

Belongs to the RecO family.

In terms of biological role, involved in DNA repair and RecF pathway recombination. The sequence is that of DNA repair protein RecO from Synechococcus elongatus (strain ATCC 33912 / PCC 7942 / FACHB-805) (Anacystis nidulans R2).